The chain runs to 683 residues: DNA-directed RNA polymerase subunit beta' (683 aa).

Positions 69, 71, 87, and 90 each coordinate Zn(2+). Positions 492, 494, and 496 each coordinate Mg(2+).

This sequence belongs to the RNA polymerase beta' chain family. RpoC1 subfamily. In terms of assembly, in plastids the minimal PEP RNA polymerase catalytic core is composed of four subunits: alpha, beta, beta', and beta''. When a (nuclear-encoded) sigma factor is associated with the core the holoenzyme is formed, which can initiate transcription. Requires Mg(2+) as cofactor. It depends on Zn(2+) as a cofactor.

The protein resides in the plastid. It is found in the chloroplast. The catalysed reaction is RNA(n) + a ribonucleoside 5'-triphosphate = RNA(n+1) + diphosphate. Functionally, DNA-dependent RNA polymerase catalyzes the transcription of DNA into RNA using the four ribonucleoside triphosphates as substrates. The polypeptide is DNA-directed RNA polymerase subunit beta' (Coffea arabica (Arabian coffee)).